The chain runs to 394 residues: Peroxisomal membrane protein PEX25 (394 aa).

The segment covering 1–25 (MSQFGTTDIVSGSETPPYSGASYQD) has biased composition (polar residues). A disordered region spans residues 1-65 (MSQFGTTDIV…SRSDDEDSQA (65 aa)). Residues 1 to 366 (MSQFGTTDIV…LNLKTPKGTY (366 aa)) lie on the Cytoplasmic side of the membrane. Basic and acidic residues predominate over residues 51 to 65 (SHTESSRSDDEDSQA). Residues serine 58, serine 63, and serine 289 each carry the phosphoserine modification. The helical transmembrane segment at 367–383 (AVLSLGSGLTGLVKLWI) threads the bilayer. Residues 384–394 (TTKRSLCSSKD) are Lumenal-facing.

In terms of assembly, homooligomer. Interacts with PEX27 and PEX34.

The protein resides in the peroxisome membrane. Functionally, required for regulation of peroxisome size and maintenance. Has a role in the import of peroxisomal matrix proteins. Imports RHO1 into the peroxisome. Also promotes peroxisome division and biogenesis. The polypeptide is Peroxisomal membrane protein PEX25 (PEX25) (Saccharomyces cerevisiae (strain ATCC 204508 / S288c) (Baker's yeast)).